The following is a 373-amino-acid chain: Phospho-N-acetylmuramoyl-pentapeptide-transferase (373 aa).

Transmembrane regions (helical) follow at residues 28 to 48, 72 to 92, 94 to 114, 135 to 155, 177 to 197, 212 to 232, 252 to 272, 276 to 296, 301 to 321, and 350 to 370; these read LLTV…TIAY, TPTM…LCWA, LANP…AVGW, YFWL…IASQ, IVPL…YFVI, GLAI…SYVS, VTIV…YNAH, VFMG…IAVM, IAFA…ILQV, and QVVV…LMTL.

It belongs to the glycosyltransferase 4 family. MraY subfamily. Mg(2+) serves as cofactor.

Its subcellular location is the cell inner membrane. The catalysed reaction is UDP-N-acetyl-alpha-D-muramoyl-L-alanyl-gamma-D-glutamyl-meso-2,6-diaminopimeloyl-D-alanyl-D-alanine + di-trans,octa-cis-undecaprenyl phosphate = di-trans,octa-cis-undecaprenyl diphospho-N-acetyl-alpha-D-muramoyl-L-alanyl-D-glutamyl-meso-2,6-diaminopimeloyl-D-alanyl-D-alanine + UMP. It participates in cell wall biogenesis; peptidoglycan biosynthesis. Functionally, catalyzes the initial step of the lipid cycle reactions in the biosynthesis of the cell wall peptidoglycan: transfers peptidoglycan precursor phospho-MurNAc-pentapeptide from UDP-MurNAc-pentapeptide onto the lipid carrier undecaprenyl phosphate, yielding undecaprenyl-pyrophosphoryl-MurNAc-pentapeptide, known as lipid I. The sequence is that of Phospho-N-acetylmuramoyl-pentapeptide-transferase from Psychrobacter sp. (strain PRwf-1).